A 781-amino-acid chain; its full sequence is Cation channel sperm-associated auxiliary subunit delta (781 aa).

Positions 1-20 are cleaved as a signal peptide; it reads MLVLMLVVATTFRLCPLVKA. Topologically, residues 21–725 are extracellular; sequence RPLCRIRTLR…YGAFPLSIFP (705 aa). Disulfide bonds link C24–C370, C60–C146, C145–C153, C388–C497, C511–C705, C526–C573, and C625–C655. N231, N294, N458, N473, N539, and N631 each carry an N-linked (GlcNAc...) asparagine glycan. Residues 726–749 form a helical membrane-spanning segment; sequence PEITIVLLTAATLLSIWLAYMIPQ. The Cytoplasmic segment spans residues 750–781; the sequence is LLHTEQGLEGNGFWVRLYQRCRKSCACLWGRC.

This sequence belongs to the CATSPERD family. Component of the CatSper complex or CatSpermasome composed of the core pore-forming members CATSPER1, CATSPER2, CATSPER3 and CATSPER4 as well as auxiliary members CATSPERB, CATSPERG, CATSPERD, CATSPERE, CATSPERZ, C2CD6/CATSPERT, TMEM249, TMEM262 and EFCAB9. HSPA1 may be an additional auxiliary complex member. The core complex members CATSPER1, CATSPER2, CATSPER3 and CATSPER4 form a heterotetrameric channel. The auxiliary CATSPERB, CATSPERG, CATSPERD and CATSPERE subunits form a pavilion-like structure over the pore which stabilizes the complex through interactions with CATSPER4, CATSPER3, CATSPER1 and CATSPER2 respectively. TMEM262/CATSPERH interacts with CATSPERB, further stabilizing the complex. C2CD6/CATSPERT interacts at least with CATSPERD and is required for targeting the CatSper complex in the flagellar membrane.

It localises to the cell projection. The protein localises to the cilium. The protein resides in the flagellum membrane. Functionally, auxiliary component of the CatSper complex, a complex involved in sperm cell hyperactivation. Sperm cell hyperactivation is needed for sperm motility which is essential late in the preparation of sperm for fertilization. Required for CATSPER1 stability before intraflagellar transport and/or incorporation of the CatSper complex channel into the flagellar membrane. This chain is Cation channel sperm-associated auxiliary subunit delta, found in Bos taurus (Bovine).